The sequence spans 414 residues: Putative transporter YoaB (414 aa).

The Cytoplasmic segment spans residues 1-11; it reads MLDKIGIPKRL. Residues 12–32 traverse the membrane as a helical segment; the sequence is AWGFLGVVLFMMGDGLEQGWL. Residues 33 to 47 lie on the Extracellular side of the membrane; the sequence is SPFLIENGLTVQQSA. Residues 48–68 form a helical membrane-spanning segment; sequence SIFSIYGIALAIASWFSGVCL. The Cytoplasmic portion of the chain corresponds to 69 to 75; that stretch reads EAFGAKR. Residues 76-96 form a helical membrane-spanning segment; it reads TMFMGLLFYVIGTAAFIVFGF. The Extracellular portion of the chain corresponds to 97-107; the sequence is EQLNLPVMYVT. Residues 108–128 form a helical membrane-spanning segment; the sequence is YFVKGLGYPLFAYSFLTWVIY. The Cytoplasmic portion of the chain corresponds to 129–136; that stretch reads RTPQSKLS. Residues 137 to 157 traverse the membrane as a helical segment; the sequence is TAVGWFWIAYCLGMFVFGAWY. The Extracellular portion of the chain corresponds to 158–167; the sequence is SSYAIKAFGY. The chain crosses the membrane as a helical span at residues 168–188; sequence LNTLWSSIFWVCLGAFFALFI. Residues 189–219 are Cytoplasmic-facing; the sequence is NKDRFEKKKRKRSETAEELLKGVTILFTNPR. The chain crosses the membrane as a helical span at residues 220–240; that stretch reads VLTGGIIRIINSIGTYGFPVF. Topologically, residues 241-255 are extracellular; sequence LPMHMAQHGISTNVW. A helical transmembrane segment spans residues 256–276; that stretch reads LQIWGTIFLGNIVFNLIFGIV. Topologically, residues 277–286 are cytoplasmic; sequence GDKFGWKNTV. The chain crosses the membrane as a helical span at residues 287–307; sequence IWFGGVGCGIFTVLLYYAPVF. At 308 to 316 the chain is on the extracellular side; that stretch reads SGGSLAVVS. Residues 317-337 form a helical membrane-spanning segment; that stretch reads VIGFIWGGLLAGYVPIGAIVP. The Cytoplasmic portion of the chain corresponds to 338–343; that stretch reads TVAGKD. A helical transmembrane segment spans residues 344 to 364; sequence KGAAMSVLNLAAGLSAFVGPA. Over 365–375 the chain is Extracellular; it reads LAWLFIGLVGA. A helical transmembrane segment spans residues 376-398; the sequence is QGVVWIFAALYLASAVLTKCIHI. The Cytoplasmic segment spans residues 399 to 414; that stretch reads PEEKAVKEETSPQYAS.

This sequence belongs to the major facilitator superfamily. Sugar transporter (TC 2.A.1.1) family. CsbX subfamily.

It is found in the cell membrane. This is Putative transporter YoaB (yoaB) from Bacillus subtilis (strain 168).